The primary structure comprises 68 residues: ATP synthase subunit c (68 aa).

2 helical membrane passes run 5–25 (AAAIAIGLAALGAGLGNGMIV) and 47–67 (FIGVALVEAIPIIAAVIAFMV).

It belongs to the ATPase C chain family. In terms of assembly, F-type ATPases have 2 components, F(1) - the catalytic core - and F(0) - the membrane proton channel. F(1) has five subunits: alpha(3), beta(3), gamma(1), delta(1), epsilon(1). F(0) has three main subunits: a(1), b(2) and c(10-14). The alpha and beta chains form an alternating ring which encloses part of the gamma chain. F(1) is attached to F(0) by a central stalk formed by the gamma and epsilon chains, while a peripheral stalk is formed by the delta and b chains.

The protein resides in the cell membrane. In terms of biological role, f(1)F(0) ATP synthase produces ATP from ADP in the presence of a proton or sodium gradient. F-type ATPases consist of two structural domains, F(1) containing the extramembraneous catalytic core and F(0) containing the membrane proton channel, linked together by a central stalk and a peripheral stalk. During catalysis, ATP synthesis in the catalytic domain of F(1) is coupled via a rotary mechanism of the central stalk subunits to proton translocation. Its function is as follows. Key component of the F(0) channel; it plays a direct role in translocation across the membrane. A homomeric c-ring of between 10-14 subunits forms the central stalk rotor element with the F(1) delta and epsilon subunits. The sequence is that of ATP synthase subunit c from Oceanobacillus iheyensis (strain DSM 14371 / CIP 107618 / JCM 11309 / KCTC 3954 / HTE831).